Here is a 378-residue protein sequence, read N- to C-terminus: Probable G-protein coupled receptor frpr-1 (378 aa).

7 helical membrane-spanning segments follow: residues 47-67, 85-105, 120-140, 180-200, 243-263, 277-297, and 315-337; these read LVVI…GNAL, LFAL…LFFL, AVLS…SVFI, VIVC…YNSP, TIVM…AIVI, IITL…PLTV, and SNLM…GSNF.

The protein belongs to the G-protein coupled receptor 1 family.

The protein resides in the cell membrane. This is Probable G-protein coupled receptor frpr-1 from Caenorhabditis elegans.